A 247-amino-acid polypeptide reads, in one-letter code: Carboxy-S-adenosyl-L-methionine synthase (247 aa).

S-adenosyl-L-methionine is bound by residues Tyr40, 65 to 67, 90 to 91, 122 to 123, Asn137, and Arg204; these read GCS, DN, and DI.

The protein belongs to the class I-like SAM-binding methyltransferase superfamily. Cx-SAM synthase family. In terms of assembly, homodimer.

It carries out the reaction prephenate + S-adenosyl-L-methionine = carboxy-S-adenosyl-L-methionine + 3-phenylpyruvate + H2O. Its function is as follows. Catalyzes the conversion of S-adenosyl-L-methionine (SAM) to carboxy-S-adenosyl-L-methionine (Cx-SAM). This Stutzerimonas stutzeri (strain A1501) (Pseudomonas stutzeri) protein is Carboxy-S-adenosyl-L-methionine synthase.